A 284-amino-acid chain; its full sequence is 4-hydroxybenzoate octaprenyltransferase (284 aa).

Helical transmembrane passes span 16-36 (PIGI…ASDG), 40-60 (WTLL…GCAI), 91-111 (LLVA…LNTL), 132-152 (FFAI…PMGF), 157-177 (NTVP…AVAY), 206-226 (VAAV…VGWQ), 231-251 (TWFA…YTLI), and 259-279 (CFAA…GVVL).

This sequence belongs to the UbiA prenyltransferase family. Mg(2+) is required as a cofactor.

Its subcellular location is the cell inner membrane. It catalyses the reaction all-trans-octaprenyl diphosphate + 4-hydroxybenzoate = 4-hydroxy-3-(all-trans-octaprenyl)benzoate + diphosphate. It participates in cofactor biosynthesis; ubiquinone biosynthesis. Catalyzes the prenylation of para-hydroxybenzoate (PHB) with an all-trans polyprenyl group. Mediates the second step in the final reaction sequence of ubiquinone-8 (UQ-8) biosynthesis, which is the condensation of the polyisoprenoid side chain with PHB, generating the first membrane-bound Q intermediate 3-octaprenyl-4-hydroxybenzoate. The polypeptide is 4-hydroxybenzoate octaprenyltransferase (Herminiimonas arsenicoxydans).